A 286-amino-acid polypeptide reads, in one-letter code: Shikimate dehydrogenase (NADP(+)) (286 aa).

Residues 19 to 21 (SLS) and T66 each bind shikimate. The Proton acceptor role is filled by K70. Shikimate is bound by residues N91 and D107. Residues 129–133 (GSGGA) and L229 contribute to the NADP(+) site. Y231 provides a ligand contact to shikimate. Residue G252 coordinates NADP(+).

It belongs to the shikimate dehydrogenase family. As to quaternary structure, homodimer.

It carries out the reaction shikimate + NADP(+) = 3-dehydroshikimate + NADPH + H(+). It functions in the pathway metabolic intermediate biosynthesis; chorismate biosynthesis; chorismate from D-erythrose 4-phosphate and phosphoenolpyruvate: step 4/7. Its function is as follows. Involved in the biosynthesis of the chorismate, which leads to the biosynthesis of aromatic amino acids. Catalyzes the reversible NADPH linked reduction of 3-dehydroshikimate (DHSA) to yield shikimate (SA). The sequence is that of Shikimate dehydrogenase (NADP(+)) from Prochlorococcus marinus (strain MIT 9215).